Consider the following 431-residue polypeptide: MTRDLTITAVHLTPILVADPPLLNTQGVHQPYTPRLIVEVETADGVTGVGETYGDAKYLELARPFAAKLVGRQVSDLNGLFTLADEVAVDSSRVFGQVDVGGLRGVQTADKLRLSVVSGFEVACLDALGKALGLPVHALLGGKVRDAVEYSAYLFYKWADHPEGVASEKDDWGAAVDPAGVVAQARAFTERYGFTSFKLKGGVFPPEEEIAAVKALAEAFPGHPLRLDPNGAWSVETSLKVAAELGDVLEYLEDPALGTPAMAEVAAKTGVPLATNMCVTTFAEIQEAFTKGAVQVVLSDHHYWGGLRNTQQLAAVCRTFGVGVSMHSNTHLGISLAAMTHVAATVPDLHHACDSHYPWQSEDVLTERLAFDGGKVAVSDAPGLGVALDRERLAFLHRRWLDDDGTLRDRDDAAAMRVADPEWVTPSVPRW.

His29, Thr108, Tyr153, and Lys198 together coordinate substrate. Catalysis depends on Lys200, which acts as the Proton acceptor. The Mg(2+) site is built by Asp228 and Asn276. Substrate is bound by residues Asp228–Asn230, Asn276, His327–Asn329, His356, and Arg410. The active-site Proton acceptor is His327.

This sequence belongs to the mandelate racemase/muconate lactonizing enzyme family. GlucD subfamily. It depends on Mg(2+) as a cofactor.

The catalysed reaction is D-glucarate = 5-dehydro-4-deoxy-D-glucarate + H2O. It participates in carbohydrate acid metabolism; D-glucarate degradation; 2,5-dioxopentanoate from D-glucarate: step 1/2. Catalyzes the dehydration of glucarate to 5-keto-4-deoxy-D-glucarate (5-kdGluc). The protein is Probable glucarate dehydratase (gudD) of Streptomyces coelicolor (strain ATCC BAA-471 / A3(2) / M145).